The sequence spans 332 residues: uncharacterized protein (332 aa).

Residues P159–P256 are disordered. Residues R201–R231 show a composition bias toward pro residues.

The protein localises to the virion. This is an uncharacterized protein from Acanthamoeba polyphaga (Amoeba).